The primary structure comprises 398 residues: Palmitoyl-[acyl-carrier-protein] 4-desaturase 3, chloroplastic (398 aa).

Residues 1–29 (MALRSLFLPNAFPNASSFRGGSRRGAAPR) constitute a chloroplast transit peptide. The Fe cation site is built by E139, E177, H180, E230, E263, and H266.

The protein belongs to the fatty acid desaturase type 2 family. Homodimer. Fe(2+) is required as a cofactor. As to expression, preferentially expressed in the flower labellum. Low expression in leaves.

It localises to the plastid. The protein localises to the chloroplast stroma. It catalyses the reaction hexadecanoyl-[ACP] + 2 reduced [2Fe-2S]-[ferredoxin] + O2 + 2 H(+) = (4Z)-hexadecenoyl-[ACP] + 2 oxidized [2Fe-2S]-[ferredoxin] + 2 H2O. It functions in the pathway lipid metabolism; fatty acid metabolism. In terms of biological role, converts palmitoyl-ACP to (4Z)-hexadec-4-enoyl-ACP by introduction of a cis double bond between carbons 4 and 5 of the acyl chain. The chain is Palmitoyl-[acyl-carrier-protein] 4-desaturase 3, chloroplastic (SAD3) from Ophrys arachnitiformis subsp. archipelagi (Orchid).